Reading from the N-terminus, the 254-residue chain is Probable septum site-determining protein MinC (254 aa).

The protein belongs to the MinC family. Interacts with MinD and FtsZ.

Cell division inhibitor that blocks the formation of polar Z ring septums. Rapidly oscillates between the poles of the cell to destabilize FtsZ filaments that have formed before they mature into polar Z rings. Prevents FtsZ polymerization. This Burkholderia ambifaria (strain ATCC BAA-244 / DSM 16087 / CCUG 44356 / LMG 19182 / AMMD) (Burkholderia cepacia (strain AMMD)) protein is Probable septum site-determining protein MinC.